Consider the following 239-residue polypeptide: Ubiquinone biosynthesis O-methyltransferase (239 aa).

Positions 42, 62, 83, and 127 each coordinate S-adenosyl-L-methionine.

It belongs to the methyltransferase superfamily. UbiG/COQ3 family.

The enzyme catalyses a 3-demethylubiquinol + S-adenosyl-L-methionine = a ubiquinol + S-adenosyl-L-homocysteine + H(+). It catalyses the reaction a 3-(all-trans-polyprenyl)benzene-1,2-diol + S-adenosyl-L-methionine = a 2-methoxy-6-(all-trans-polyprenyl)phenol + S-adenosyl-L-homocysteine + H(+). Its pathway is cofactor biosynthesis; ubiquinone biosynthesis. In terms of biological role, O-methyltransferase that catalyzes the 2 O-methylation steps in the ubiquinone biosynthetic pathway. This is Ubiquinone biosynthesis O-methyltransferase from Pectobacterium carotovorum subsp. carotovorum (strain PC1).